The sequence spans 185 residues: Ribosome-recycling factor (185 aa).

It belongs to the RRF family.

The protein localises to the cytoplasm. Responsible for the release of ribosomes from messenger RNA at the termination of protein biosynthesis. May increase the efficiency of translation by recycling ribosomes from one round of translation to another. The protein is Ribosome-recycling factor of Corynebacterium diphtheriae (strain ATCC 700971 / NCTC 13129 / Biotype gravis).